The chain runs to 292 residues: Undecaprenyl-diphosphatase 2 (292 aa).

A run of 5 helical transmembrane segments spans residues 89–109 (WLVI…QDAI), 118–138 (LIAT…WYAS), 203–223 (FLLA…SIGG), 232–252 (PTIL…AWFL), and 263–283 (FVLY…GGAL).

This sequence belongs to the UppP family.

It is found in the cell membrane. The catalysed reaction is di-trans,octa-cis-undecaprenyl diphosphate + H2O = di-trans,octa-cis-undecaprenyl phosphate + phosphate + H(+). Catalyzes the dephosphorylation of undecaprenyl diphosphate (UPP). Confers resistance to bacitracin. The polypeptide is Undecaprenyl-diphosphatase 2 (Frankia casuarinae (strain DSM 45818 / CECT 9043 / HFP020203 / CcI3)).